We begin with the raw amino-acid sequence, 226 residues long: Ribonuclease 3 (226 aa).

Residues 6-128 (INRLQRKLGY…LIGGVFLDSD (123 aa)) form the RNase III domain. Glu-41 provides a ligand contact to Mg(2+). Residue Asp-45 is part of the active site. Mg(2+) contacts are provided by Asp-114 and Glu-117. The active site involves Glu-117. Residues 155–225 (DPKTRLQEYL…AEQALKKLEL (71 aa)) form the DRBM domain.

It belongs to the ribonuclease III family. As to quaternary structure, homodimer. Requires Mg(2+) as cofactor.

It localises to the cytoplasm. The enzyme catalyses Endonucleolytic cleavage to 5'-phosphomonoester.. In terms of biological role, digests double-stranded RNA. Involved in the processing of primary rRNA transcript to yield the immediate precursors to the large and small rRNAs (23S and 16S). Processes some mRNAs, and tRNAs when they are encoded in the rRNA operon. Processes pre-crRNA and tracrRNA of type II CRISPR loci if present in the organism. This chain is Ribonuclease 3, found in Escherichia coli O139:H28 (strain E24377A / ETEC).